Reading from the N-terminus, the 166-residue chain is Large ribosomal subunit protein uL10 (166 aa).

Belongs to the universal ribosomal protein uL10 family. In terms of assembly, part of the ribosomal stalk of the 50S ribosomal subunit. The N-terminus interacts with L11 and the large rRNA to form the base of the stalk. The C-terminus forms an elongated spine to which L12 dimers bind in a sequential fashion forming a multimeric L10(L12)X complex.

Its function is as follows. Forms part of the ribosomal stalk, playing a central role in the interaction of the ribosome with GTP-bound translation factors. This chain is Large ribosomal subunit protein uL10, found in Geobacillus sp. (strain WCH70).